A 444-amino-acid polypeptide reads, in one-letter code: Jacalin-related lectin 42 (444 aa).

At A2 the chain carries N-acetylalanine. Jacalin-type lectin domains lie at 2-143 (ALMV…YYIR), 146-289 (ATKS…YYAP), and 297-441 (TEKL…HVIP).

It belongs to the jacalin lectin family.

The protein is Jacalin-related lectin 42 (JAL42) of Arabidopsis thaliana (Mouse-ear cress).